A 214-amino-acid chain; its full sequence is MASSILLLVVLAVVSAPVALVMAGDPDILTDYVIPAGSNAENITGDFFTFTGFRNPLSMNMSMPMPNANFTVTKATMAEFPALNGQSVSYAVLMYPPATLNPPHTHPRSAELLLLVDGALSVGFVDTTNKLYTQDLAAGDMFVFPKGMVHFQFNSGNQPAMALSAFGSAAAGLVSVPVTVFGTNIDDAVLAKSFKTDVPTIQKLKAGLTPPKKA.

A signal peptide spans 1–23 (MASSILLLVVLAVVSAPVALVMA). 3 N-linked (GlcNAc...) asparagine glycosylation sites follow: asparagine 42, asparagine 60, and asparagine 69. Positions 59-202 (MNMSMPMPNA…SFKTDVPTIQ (144 aa)) constitute a Cupin type-1 domain. 4 residues coordinate Mn(2+): histidine 104, histidine 106, glutamate 111, and histidine 150.

The protein belongs to the germin family. As to quaternary structure, oligomer (believed to be a pentamer but probably hexamer).

The protein localises to the secreted. Its subcellular location is the extracellular space. It is found in the apoplast. Functionally, may play a role in plant defense. Probably has no oxalate oxidase activity even if the active site is conserved. This Oryza sativa subsp. japonica (Rice) protein is Germin-like protein 9-3.